The following is a 312-amino-acid chain: Porphobilinogen deaminase (312 aa).

An S-(dipyrrolylmethanemethyl)cysteine modification is found at cysteine 241.

The protein belongs to the HMBS family. As to quaternary structure, monomer. The cofactor is dipyrromethane.

The enzyme catalyses 4 porphobilinogen + H2O = hydroxymethylbilane + 4 NH4(+). The protein operates within porphyrin-containing compound metabolism; protoporphyrin-IX biosynthesis; coproporphyrinogen-III from 5-aminolevulinate: step 2/4. It functions in the pathway porphyrin-containing compound metabolism; chlorophyll biosynthesis. Its function is as follows. Tetrapolymerization of the monopyrrole PBG into the hydroxymethylbilane pre-uroporphyrinogen in several discrete steps. The chain is Porphobilinogen deaminase from Prosthecochloris aestuarii (strain DSM 271 / SK 413).